Reading from the N-terminus, the 410-residue chain is LL-diaminopimelate aminotransferase (410 aa).

Substrate is bound by residues Tyr15 and Gly42. Pyridoxal 5'-phosphate is bound by residues Tyr72, 108-109, Tyr132, Asn187, Tyr218, and 246-248; these read SK and SFS. Residues Lys109, Tyr132, and Asn187 each contribute to the substrate site. Lys249 bears the N6-(pyridoxal phosphate)lysine mark. 2 residues coordinate pyridoxal 5'-phosphate: Arg257 and Asn292. Residues Asn292 and Arg388 each coordinate substrate.

It belongs to the class-I pyridoxal-phosphate-dependent aminotransferase family. LL-diaminopimelate aminotransferase subfamily. As to quaternary structure, homodimer. Pyridoxal 5'-phosphate is required as a cofactor.

It carries out the reaction (2S,6S)-2,6-diaminopimelate + 2-oxoglutarate = (S)-2,3,4,5-tetrahydrodipicolinate + L-glutamate + H2O + H(+). It functions in the pathway amino-acid biosynthesis; L-lysine biosynthesis via DAP pathway; LL-2,6-diaminopimelate from (S)-tetrahydrodipicolinate (aminotransferase route): step 1/1. In terms of biological role, involved in the synthesis of meso-diaminopimelate (m-DAP or DL-DAP), required for both lysine and peptidoglycan biosynthesis. Catalyzes the direct conversion of tetrahydrodipicolinate to LL-diaminopimelate. This is LL-diaminopimelate aminotransferase from Syntrophotalea carbinolica (strain DSM 2380 / NBRC 103641 / GraBd1) (Pelobacter carbinolicus).